Here is a 312-residue protein sequence, read N- to C-terminus: Signal peptidase I (312 aa).

A helical transmembrane segment spans residues I7–L27. The Cytoplasmic portion of the chain corresponds to I28 to S63. The chain crosses the membrane as a helical span at residues L64–I84. Over P85–Y312 the chain is Extracellular. Catalysis depends on residues S88 and K142.

Belongs to the peptidase S26 family.

It localises to the cell membrane. The enzyme catalyses Cleavage of hydrophobic, N-terminal signal or leader sequences from secreted and periplasmic proteins.. This Buchnera aphidicola subsp. Schizaphis graminum (strain Sg) protein is Signal peptidase I (lepB).